The chain runs to 127 residues: Small ribosomal subunit protein uS11 (127 aa).

Belongs to the universal ribosomal protein uS11 family. In terms of assembly, part of the 30S ribosomal subunit. Interacts with proteins S7 and S18. Binds to IF-3.

In terms of biological role, located on the platform of the 30S subunit, it bridges several disparate RNA helices of the 16S rRNA. Forms part of the Shine-Dalgarno cleft in the 70S ribosome. In Rickettsia canadensis (strain McKiel), this protein is Small ribosomal subunit protein uS11.